The primary structure comprises 370 residues: MAPPSRRECPSPSWRFPGLLLAALVLLRSSCSDACGPPPTFEAMELTSRPKPYYKVGERVEYDCKKGYHHFAPFLTHSICDRNHTWLPISDEPCVRKVCHYIPNPLHGEAILANGSYSFGNQLHFICNDGYYLIGKEILYCELKGSDAVWSGRPPICQKILCKPPPKINNGKHTFSDVDVFEYLDAVTYSCDPAPGPDPFSLIGESTIYCRDNSVWSGDAPECKVVKCRFPVIENGKQIAGFGKKFYYKATVIFECDEGFHIIGSDTIVCNSNSTWDPPVPKCVKVSTSPATVSPTSSVPGYPNPDEGMLNSLDEWAIALIVIAILVGVAIISFGLHRYLQRRKKKGKADGTAEYATYQSKSATLAEQRS.

An N-terminal signal peptide occupies residues 1–32 (MAPPSRRECPSPSWRFPGLLLAALVLLRSSCS). Sushi domains are found at residues 33–96 (DACG…PCVR), 97–159 (KVCH…ICQK), 160–225 (ILCK…ECKV), and 226–285 (VKCR…KCVK). Residues 33-315 (DACGPPPTFE…DEGMLNSLDE (283 aa)) are Extracellular-facing. 8 disulfide bridges follow: Cys35–Cys80, Cys64–Cys94, Cys99–Cys141, Cys127–Cys157, Cys162–Cys210, Cys191–Cys223, Cys228–Cys270, and Cys256–Cys283. N-linked (GlcNAc...) asparagine glycosylation occurs at Asn114. An O-linked (GalNAc...) serine glycan is attached at Ser287. Residue Thr288 is glycosylated (O-linked (GalNAc...) threonine). Residue Ser289 is glycosylated (O-linked (GalNAc...) serine). The O-linked (GalNAc...) threonine glycan is linked to Thr292. The O-linked (GalNAc...) serine glycan is linked to Ser294. Thr296 carries O-linked (GalNAc...) threonine glycosylation. A helical membrane pass occupies residues 316 to 336 (WAIALIVIAILVGVAIISFGL). The Cytoplasmic portion of the chain corresponds to 337–370 (HRYLQRRKKKGKADGTAEYATYQSKSATLAEQRS).

As to quaternary structure, interacts with C3b. Interacts with C4b. Interacts with moesin/MSN. Post-translationally, O-glycosylated.

It localises to the cytoplasmic vesicle. Its subcellular location is the secretory vesicle. The protein resides in the acrosome inner membrane. Its function is as follows. Acts as a cofactor for complement factor I, a serine protease which protects autologous cells against complement-mediated injury by cleaving C3b and C4b deposited on host tissue. May be involved in the fusion of the spermatozoa with the oocyte during fertilization. Also acts as a costimulatory factor for T-cells which induces the differentiation of CD4+ into T-regulatory 1 cells. T-regulatory 1 cells suppress immune responses by secreting interleukin-10, and therefore are thought to prevent autoimmunity. The protein is Membrane cofactor protein (CD46) of Saguinus oedipus (Cotton-top tamarin).